Here is a 217-residue protein sequence, read N- to C-terminus: GTP cyclohydrolase 1 (217 aa).

Zn(2+)-binding residues include Cys-109, His-112, and Cys-180.

The protein belongs to the GTP cyclohydrolase I family. As to quaternary structure, toroid-shaped homodecamer, composed of two pentamers of five dimers.

It carries out the reaction GTP + H2O = 7,8-dihydroneopterin 3'-triphosphate + formate + H(+). Its pathway is cofactor biosynthesis; 7,8-dihydroneopterin triphosphate biosynthesis; 7,8-dihydroneopterin triphosphate from GTP: step 1/1. The protein is GTP cyclohydrolase 1 of Photobacterium profundum (strain SS9).